A 131-amino-acid polypeptide reads, in one-letter code: Small ribosomal subunit protein uS9 (131 aa).

This sequence belongs to the universal ribosomal protein uS9 family.

This Mycoplasmopsis synoviae (strain 53) (Mycoplasma synoviae) protein is Small ribosomal subunit protein uS9.